The following is a 253-amino-acid chain: 2-C-methyl-D-erythritol 4-phosphate cytidylyltransferase (253 aa).

Belongs to the IspD/TarI cytidylyltransferase family. IspD subfamily.

The catalysed reaction is 2-C-methyl-D-erythritol 4-phosphate + CTP + H(+) = 4-CDP-2-C-methyl-D-erythritol + diphosphate. It participates in isoprenoid biosynthesis; isopentenyl diphosphate biosynthesis via DXP pathway; isopentenyl diphosphate from 1-deoxy-D-xylulose 5-phosphate: step 2/6. In terms of biological role, catalyzes the formation of 4-diphosphocytidyl-2-C-methyl-D-erythritol from CTP and 2-C-methyl-D-erythritol 4-phosphate (MEP). This Idiomarina loihiensis (strain ATCC BAA-735 / DSM 15497 / L2-TR) protein is 2-C-methyl-D-erythritol 4-phosphate cytidylyltransferase.